We begin with the raw amino-acid sequence, 588 residues long: Sulfite reductase [NADPH] hemoprotein beta-component (588 aa).

The [4Fe-4S] cluster site is built by cysteine 442, cysteine 448, cysteine 487, and cysteine 491. Cysteine 491 lines the siroheme pocket.

This sequence belongs to the nitrite and sulfite reductase 4Fe-4S domain family. As to quaternary structure, alpha(8)-beta(8). The alpha component is a flavoprotein, the beta component is a hemoprotein. Siroheme serves as cofactor. [4Fe-4S] cluster is required as a cofactor.

The enzyme catalyses hydrogen sulfide + 3 NADP(+) + 3 H2O = sulfite + 3 NADPH + 4 H(+). Its pathway is sulfur metabolism; hydrogen sulfide biosynthesis; hydrogen sulfide from sulfite (NADPH route): step 1/1. In terms of biological role, component of the sulfite reductase complex that catalyzes the 6-electron reduction of sulfite to sulfide. This is one of several activities required for the biosynthesis of L-cysteine from sulfate. This chain is Sulfite reductase [NADPH] hemoprotein beta-component, found in Actinobacillus pleuropneumoniae serotype 7 (strain AP76).